We begin with the raw amino-acid sequence, 99 residues long: NADH-quinone oxidoreductase subunit K (99 aa).

The next 3 helical transmembrane spans lie at 3–23 (PANY…GVLL), 28–48 (IVMF…FVTF), and 59–79 (MIAF…LAII).

It belongs to the complex I subunit 4L family. In terms of assembly, NDH-1 is composed of 14 different subunits. Subunits NuoA, H, J, K, L, M, N constitute the membrane sector of the complex.

It is found in the cell membrane. The catalysed reaction is a quinone + NADH + 5 H(+)(in) = a quinol + NAD(+) + 4 H(+)(out). Functionally, NDH-1 shuttles electrons from NADH, via FMN and iron-sulfur (Fe-S) centers, to quinones in the respiratory chain. The immediate electron acceptor for the enzyme in this species is believed to be a menaquinone. Couples the redox reaction to proton translocation (for every two electrons transferred, four hydrogen ions are translocated across the cytoplasmic membrane), and thus conserves the redox energy in a proton gradient. This Mycobacterium marinum (strain ATCC BAA-535 / M) protein is NADH-quinone oxidoreductase subunit K.